The primary structure comprises 248 residues: Calpain small subunit 2 (248 aa).

Residues alanine 89, aspartate 92, glutamate 94, aspartate 117, aspartate 132, aspartate 134, threonine 136, lysine 138, glutamate 143, aspartate 162, aspartate 164, serine 166, and aspartate 205 each contribute to the Ca(2+) site. EF-hand domains are found at residues phenylalanine 119–lysine 152, asparagine 149–glutamine 184, leucine 185–leucine 213, and valine 214–serine 248.

In terms of assembly, heterodimer of a large (catalytic) and a small (regulatory) subunit.

The protein localises to the cytoplasm. Its subcellular location is the cell membrane. Functionally, calcium-regulated non-lysosomal thiol-protease which catalyzes limited proteolysis of substrates involved in cytoskeletal remodeling and signal transduction. This small subunit may act as a tissue-specific chaperone of the large subunit, possibly by helping it fold into its correct conformation for activity. The polypeptide is Calpain small subunit 2 (CAPNS2) (Homo sapiens (Human)).